The primary structure comprises 114 residues: UPF0102 protein Shew_0226 (114 aa).

It belongs to the UPF0102 family.

This Shewanella loihica (strain ATCC BAA-1088 / PV-4) protein is UPF0102 protein Shew_0226.